Reading from the N-terminus, the 226-residue chain is ATP-dependent dethiobiotin synthetase BioD (226 aa).

12–17 (GIGKTV) contacts ATP. Thr16 lines the Mg(2+) pocket. Residue Lys37 is part of the active site. Position 41 (Thr41) interacts with substrate. Residues Asp49, 108-111 (EGAG), and 197-199 (PAG) contribute to the ATP site. Residues Asp49 and Glu108 each contribute to the Mg(2+) site.

The protein belongs to the dethiobiotin synthetase family. In terms of assembly, homodimer. Mg(2+) serves as cofactor.

The protein resides in the cytoplasm. It catalyses the reaction (7R,8S)-7,8-diammoniononanoate + CO2 + ATP = (4R,5S)-dethiobiotin + ADP + phosphate + 3 H(+). It functions in the pathway cofactor biosynthesis; biotin biosynthesis; biotin from 7,8-diaminononanoate: step 1/2. Its function is as follows. Catalyzes a mechanistically unusual reaction, the ATP-dependent insertion of CO2 between the N7 and N8 nitrogen atoms of 7,8-diaminopelargonic acid (DAPA, also called 7,8-diammoniononanoate) to form a ureido ring. The polypeptide is ATP-dependent dethiobiotin synthetase BioD (Mycolicibacterium vanbaalenii (strain DSM 7251 / JCM 13017 / BCRC 16820 / KCTC 9966 / NRRL B-24157 / PYR-1) (Mycobacterium vanbaalenii)).